Reading from the N-terminus, the 334-residue chain is Ornithine carbamoyltransferase (334 aa).

Carbamoyl phosphate-binding positions include 56-59, Q83, R107, and 134-137; these read STRT and HPTQ. L-ornithine is bound by residues N168, D232, and 236-237; that span reads SM. Residues 274-275 and R320 contribute to the carbamoyl phosphate site; that span reads CL.

It belongs to the aspartate/ornithine carbamoyltransferase superfamily. OTCase family.

It localises to the cytoplasm. It carries out the reaction carbamoyl phosphate + L-ornithine = L-citrulline + phosphate + H(+). It functions in the pathway amino-acid biosynthesis; L-arginine biosynthesis; L-arginine from L-ornithine and carbamoyl phosphate: step 1/3. In terms of biological role, reversibly catalyzes the transfer of the carbamoyl group from carbamoyl phosphate (CP) to the N(epsilon) atom of ornithine (ORN) to produce L-citrulline. The polypeptide is Ornithine carbamoyltransferase (Shigella sonnei (strain Ss046)).